The chain runs to 359 residues: Phosphoserine aminotransferase (359 aa).

R41 provides a ligand contact to L-glutamate. Pyridoxal 5'-phosphate-binding positions include A75–S76, W101, T151, D171, and Q194. K195 carries the post-translational modification N6-(pyridoxal phosphate)lysine. N236–T237 provides a ligand contact to pyridoxal 5'-phosphate.

It belongs to the class-V pyridoxal-phosphate-dependent aminotransferase family. SerC subfamily. In terms of assembly, homodimer. Pyridoxal 5'-phosphate serves as cofactor.

It is found in the cytoplasm. It carries out the reaction O-phospho-L-serine + 2-oxoglutarate = 3-phosphooxypyruvate + L-glutamate. The catalysed reaction is 4-(phosphooxy)-L-threonine + 2-oxoglutarate = (R)-3-hydroxy-2-oxo-4-phosphooxybutanoate + L-glutamate. Its pathway is amino-acid biosynthesis; L-serine biosynthesis; L-serine from 3-phospho-D-glycerate: step 2/3. It participates in cofactor biosynthesis; pyridoxine 5'-phosphate biosynthesis; pyridoxine 5'-phosphate from D-erythrose 4-phosphate: step 3/5. Its function is as follows. Catalyzes the reversible conversion of 3-phosphohydroxypyruvate to phosphoserine and of 3-hydroxy-2-oxo-4-phosphonooxybutanoate to phosphohydroxythreonine. The protein is Phosphoserine aminotransferase of Thiobacillus denitrificans (strain ATCC 25259 / T1).